Consider the following 129-residue polypeptide: Small ribosomal subunit protein uS11 (129 aa).

The protein belongs to the universal ribosomal protein uS11 family. Part of the 30S ribosomal subunit. Interacts with proteins S7 and S18. Binds to IF-3.

Located on the platform of the 30S subunit, it bridges several disparate RNA helices of the 16S rRNA. Forms part of the Shine-Dalgarno cleft in the 70S ribosome. This Parvibaculum lavamentivorans (strain DS-1 / DSM 13023 / NCIMB 13966) protein is Small ribosomal subunit protein uS11.